We begin with the raw amino-acid sequence, 125 residues long: Large ribosomal subunit protein bL12 (125 aa).

Positions 95–125 are disordered; that stretch reads APKPIKEGVDKKTAEEAKKKLEEAGAKAELK.

Belongs to the bacterial ribosomal protein bL12 family. In terms of assembly, homodimer. Part of the ribosomal stalk of the 50S ribosomal subunit. Forms a multimeric L10(L12)X complex, where L10 forms an elongated spine to which 2 to 4 L12 dimers bind in a sequential fashion. Binds GTP-bound translation factors.

Functionally, forms part of the ribosomal stalk which helps the ribosome interact with GTP-bound translation factors. Is thus essential for accurate translation. The polypeptide is Large ribosomal subunit protein bL12 (Polynucleobacter necessarius subsp. necessarius (strain STIR1)).